The chain runs to 433 residues: Glutamate-1-semialdehyde 2,1-aminomutase (433 aa).

Lys271 is modified (N6-(pyridoxal phosphate)lysine).

This sequence belongs to the class-III pyridoxal-phosphate-dependent aminotransferase family. HemL subfamily. Homodimer. Pyridoxal 5'-phosphate is required as a cofactor.

The protein localises to the cytoplasm. It carries out the reaction (S)-4-amino-5-oxopentanoate = 5-aminolevulinate. Its pathway is porphyrin-containing compound metabolism; protoporphyrin-IX biosynthesis; 5-aminolevulinate from L-glutamyl-tRNA(Glu): step 2/2. It functions in the pathway porphyrin-containing compound metabolism; chlorophyll biosynthesis. The sequence is that of Glutamate-1-semialdehyde 2,1-aminomutase from Prochlorococcus marinus (strain AS9601).